A 535-amino-acid chain; its full sequence is Butyrophilin-like protein 9 (535 aa).

Residues 1–34 (MVDLSVSPDSLKPVSLTSSLVFLMHLLLLQPGEP) form the signal peptide. Residues 35-256 (SSEVKVLGPE…VFVPGASAWK (222 aa)) are Extracellular-facing. One can recognise an Ig-like V-type domain in the interval 54–135 (EVEFPCHLWP…SDKGTYGCRF (82 aa)). Cysteines 59 and 133 form a disulfide. N-linked (GlcNAc...) asparagine glycans are attached at residues Asn-102, Asn-139, and Asn-224. Residues 257 to 277 (SAFVATLPLLLVLAALALGVL) traverse the membrane as a helical segment. A coiled-coil region spans residues 276-315 (VLRKQRRSREKLRKQAEKRQEKLTAELEKLQTELDWRRAE). Residues 278-535 (RKQRRSREKL…EPADPALDWW (258 aa)) lie on the Cytoplasmic side of the membrane. Residues 310–509 (DWRRAEGQAE…LTICPLPVRG (200 aa)) enclose the B30.2/SPRY domain. The segment at 340-367 (SLEVSEDGKSVSSRGAPPGPAPGHPQRF) is disordered.

Belongs to the immunoglobulin superfamily. BTN/MOG family.

Its subcellular location is the membrane. The protein is Butyrophilin-like protein 9 (BTNL9) of Homo sapiens (Human).